A 513-amino-acid chain; its full sequence is ATP synthase subunit alpha (513 aa).

169-176 is a binding site for ATP; the sequence is GDRQIGKT.

This sequence belongs to the ATPase alpha/beta chains family. F-type ATPases have 2 components, CF(1) - the catalytic core - and CF(0) - the membrane proton channel. CF(1) has five subunits: alpha(3), beta(3), gamma(1), delta(1), epsilon(1). CF(0) has three main subunits: a(1), b(2) and c(9-12). The alpha and beta chains form an alternating ring which encloses part of the gamma chain. CF(1) is attached to CF(0) by a central stalk formed by the gamma and epsilon chains, while a peripheral stalk is formed by the delta and b chains.

Its subcellular location is the cell inner membrane. It carries out the reaction ATP + H2O + 4 H(+)(in) = ADP + phosphate + 5 H(+)(out). Its function is as follows. Produces ATP from ADP in the presence of a proton gradient across the membrane. The alpha chain is a regulatory subunit. The sequence is that of ATP synthase subunit alpha from Francisella tularensis subsp. holarctica (strain OSU18).